A 521-amino-acid polypeptide reads, in one-letter code: Exodeoxyribonuclease 7 large subunit (521 aa).

Residues 494–521 (ATSGAARPKPAAKPSTKAKEPGNQGSLF) form a disordered region. Positions 498-508 (AARPKPAAKPS) are enriched in low complexity.

This sequence belongs to the XseA family. Heterooligomer composed of large and small subunits.

It localises to the cytoplasm. The catalysed reaction is Exonucleolytic cleavage in either 5'- to 3'- or 3'- to 5'-direction to yield nucleoside 5'-phosphates.. Its function is as follows. Bidirectionally degrades single-stranded DNA into large acid-insoluble oligonucleotides, which are then degraded further into small acid-soluble oligonucleotides. The protein is Exodeoxyribonuclease 7 large subunit of Mesorhizobium japonicum (strain LMG 29417 / CECT 9101 / MAFF 303099) (Mesorhizobium loti (strain MAFF 303099)).